Consider the following 118-residue polypeptide: MRVKGPSSRRKKKKILKLAKGYRGQRSRSYRRAKEAVMRALYYQYRDRKLRKREFRRLWIARINAAVRAYGLNYSTFINGLKKAGIELDRKILADMAVRDPQAFEQVVNKVKEALQVQ.

The protein belongs to the bacterial ribosomal protein bL20 family.

Its function is as follows. Binds directly to 23S ribosomal RNA and is necessary for the in vitro assembly process of the 50S ribosomal subunit. It is not involved in the protein synthesizing functions of that subunit. In Aquifex aeolicus (strain VF5), this protein is Large ribosomal subunit protein bL20 (rplT).